Reading from the N-terminus, the 576-residue chain is Epsin-1 (576 aa).

Residues Arg8, Lys11, Arg25, Asn30, Arg63, and His73 each coordinate a 1,2-diacyl-sn-glycero-3-phospho-(1D-myo-inositol-4,5-bisphosphate). The ENTH domain occupies Asn12–Arg144. The tract at residues Lys149–Glu185 is disordered. The span at Thr157–Ser167 shows a compositional bias: low complexity. 3 consecutive UIM domains span residues Glu183–Pro202, Glu208–Glu227, and Gly233–Lys252. Low complexity predominate over residues Thr265–Trp296. Residues Thr265–Phe404 form a disordered region. 8 consecutive repeat copies span residues Asp274 to Trp276, Asp294 to Trp296, Asp306 to Trp308, Asp319 to Trp321, Asp332 to Trp334, Asp349 to Trp351, Asp367 to Trp369, and Asp377 to Trp379. The tract at residues Asp274–Trp379 is 8 X 3 AA repeats of [ED]-P-W. Over residues Gly297–Thr314 the composition is skewed to pro residues. Positions Asp332–Pro368 are enriched in low complexity. Ser382 carries the post-translational modification Phosphoserine; by CDK1. The [DE]-X(1,2)-F-X-X-[FL]-X-X-X-R motif signature appears at Asp402–Arg411. Phosphoserine is present on residues Ser419, Ser420, Ser435, Ser447, and Ser454. The disordered stretch occupies residues Leu448 to Leu576. Over residues Ser454 to Arg468 the composition is skewed to pro residues. Thr460, Thr464, and Thr470 each carry phosphothreonine. The residue at position 473 (Ser473) is a Phosphoserine. At Thr494 the chain carries Phosphothreonine. Repeat copies occupy residues Asn502–Phe504 and Asn518–Phe520. A 3 X 3 AA repeats of N-P-F region spans residues Asn502–Phe574. Arg534 carries the post-translational modification Omega-N-methylarginine. Pro residues predominate over residues Gly557–Asn570. Repeat 3 spans residues Asn572–Phe574.

The protein belongs to the epsin family. Monomer. Binds clathrin, ZBTB16/ZNF145 and ITSN1. Binds ubiquitinated proteins. Binds AP2A1 and AP2A2. Interacts with RALBP1 in a complex also containing NUMB and TFAP2A during interphase and mitosis. Interacts with AP2B1. Interacts with UBQLN2. Interacts with REPS2; the interaction is direct. Interacts with EPS15; the interaction is direct. Interacts with ENTREP1. In terms of processing, phosphorylated on serine and/or threonine residues in mitotic cells. Phosphorylation reduces interaction with REPS2, AP-2 and the membrane fraction. Depolarization of synaptosomes results in dephosphorylation. Ubiquitinated.

It is found in the cytoplasm. The protein resides in the cell membrane. It localises to the nucleus. The protein localises to the membrane. Its subcellular location is the clathrin-coated pit. Its function is as follows. Binds to membranes enriched in phosphatidylinositol 4,5-bisphosphate (PtdIns(4,5)P2). Modifies membrane curvature and facilitates the formation of clathrin-coated invaginations. Regulates receptor-mediated endocytosis. This is Epsin-1 (EPN1) from Homo sapiens (Human).